Reading from the N-terminus, the 465-residue chain is ATP synthase subunit beta (465 aa).

An ATP-binding site is contributed by 148–155 (GGAGVGKT).

This sequence belongs to the ATPase alpha/beta chains family. F-type ATPases have 2 components, CF(1) - the catalytic core - and CF(0) - the membrane proton channel. CF(1) has five subunits: alpha(3), beta(3), gamma(1), delta(1), epsilon(1). CF(0) has three main subunits: a(1), b(2) and c(9-12). The alpha and beta chains form an alternating ring which encloses part of the gamma chain. CF(1) is attached to CF(0) by a central stalk formed by the gamma and epsilon chains, while a peripheral stalk is formed by the delta and b chains.

It is found in the cell inner membrane. It carries out the reaction ATP + H2O + 4 H(+)(in) = ADP + phosphate + 5 H(+)(out). Produces ATP from ADP in the presence of a proton gradient across the membrane. The catalytic sites are hosted primarily by the beta subunits. This Chromobacterium violaceum (strain ATCC 12472 / DSM 30191 / JCM 1249 / CCUG 213 / NBRC 12614 / NCIMB 9131 / NCTC 9757 / MK) protein is ATP synthase subunit beta.